Here is a 229-residue protein sequence, read N- to C-terminus: Dihydrofolate reductase (229 aa).

One can recognise a DHFR domain in the interval 11–227 (SITAVVAATA…VKYIFEMWVL (217 aa)). NADP(+)-binding positions include alanine 17 and 23–29 (GIGLNGG). 37-42 (EMKYFA) provides a ligand contact to substrate. Residue 64 to 66 (RKT) participates in NADP(+) binding. Arginine 80 provides a ligand contact to substrate. NADP(+) contacts are provided by residues 86-88 (SGK) and 127-134 (GGATLYTS).

It belongs to the dihydrofolate reductase family. Monomer.

It carries out the reaction (6S)-5,6,7,8-tetrahydrofolate + NADP(+) = 7,8-dihydrofolate + NADPH + H(+). Its pathway is cofactor biosynthesis; tetrahydrofolate biosynthesis; 5,6,7,8-tetrahydrofolate from 7,8-dihydrofolate: step 1/1. Its function is as follows. Key enzyme in folate metabolism. Catalyzes an essential reaction for de novo glycine and purine synthesis, and for DNA precursor synthesis. This Cryptococcus neoformans var. neoformans serotype D (strain JEC21 / ATCC MYA-565) (Filobasidiella neoformans) protein is Dihydrofolate reductase (DFR1).